The sequence spans 119 residues: Large ribosomal subunit protein bL20 (119 aa).

This sequence belongs to the bacterial ribosomal protein bL20 family.

Its function is as follows. Binds directly to 23S ribosomal RNA and is necessary for the in vitro assembly process of the 50S ribosomal subunit. It is not involved in the protein synthesizing functions of that subunit. In Anoxybacillus flavithermus (strain DSM 21510 / WK1), this protein is Large ribosomal subunit protein bL20.